Here is a 143-residue protein sequence, read N- to C-terminus: Large ribosomal subunit protein uL13 (143 aa).

This sequence belongs to the universal ribosomal protein uL13 family. Part of the 50S ribosomal subunit.

This protein is one of the early assembly proteins of the 50S ribosomal subunit, although it is not seen to bind rRNA by itself. It is important during the early stages of 50S assembly. This chain is Large ribosomal subunit protein uL13, found in Chloroflexus aggregans (strain MD-66 / DSM 9485).